The primary structure comprises 259 residues: Flagellar L-ring protein (259 aa).

An N-terminal signal peptide occupies residues 1–15; sequence MKRISLIALVTLMSG. A lipid anchor (N-palmitoyl cysteine) is attached at Cys-16. A lipid anchor (S-diacylglycerol cysteine) is attached at Cys-16.

It belongs to the FlgH family. In terms of assembly, the basal body constitutes a major portion of the flagellar organelle and consists of four rings (L,P,S, and M) mounted on a central rod.

The protein resides in the cell outer membrane. Its subcellular location is the bacterial flagellum basal body. Assembles around the rod to form the L-ring and probably protects the motor/basal body from shearing forces during rotation. This Vibrio vulnificus (strain YJ016) protein is Flagellar L-ring protein.